A 208-amino-acid polypeptide reads, in one-letter code: MGKKRSASSSRWLQEHFSDKYVQQAQKKGLRSRAWFKLDEIQGTDKIFRPGMTVVDLGAAPGGWSQYVVTQIGDKGRVIACDLLPMDPIVGVDFLQGDFRDELVLAALMERVGDAKVQVVMSDMAPNMSGTPSVDIPRAMYLVELAFEMAKDVLAPGGSFVVKVFQGEGFDEYLGQIRSLFTKVKIRKPEASRARSREVYIVATGRKL.

5 residues coordinate S-adenosyl-L-methionine: G62, W64, D82, D98, and D123. K163 acts as the Proton acceptor in catalysis.

Belongs to the class I-like SAM-binding methyltransferase superfamily. RNA methyltransferase RlmE family.

It is found in the cytoplasm. The catalysed reaction is uridine(2552) in 23S rRNA + S-adenosyl-L-methionine = 2'-O-methyluridine(2552) in 23S rRNA + S-adenosyl-L-homocysteine + H(+). In terms of biological role, specifically methylates the uridine in position 2552 of 23S rRNA at the 2'-O position of the ribose in the fully assembled 50S ribosomal subunit. The polypeptide is Ribosomal RNA large subunit methyltransferase E (Edwardsiella ictaluri (strain 93-146)).